Consider the following 361-residue polypeptide: Phenylalanine--tRNA ligase alpha subunit (361 aa).

Glu260 contacts Mg(2+).

It belongs to the class-II aminoacyl-tRNA synthetase family. Phe-tRNA synthetase alpha subunit type 1 subfamily. In terms of assembly, tetramer of two alpha and two beta subunits. The cofactor is Mg(2+).

It localises to the cytoplasm. The catalysed reaction is tRNA(Phe) + L-phenylalanine + ATP = L-phenylalanyl-tRNA(Phe) + AMP + diphosphate + H(+). The polypeptide is Phenylalanine--tRNA ligase alpha subunit (Bartonella quintana (strain Toulouse) (Rochalimaea quintana)).